The sequence spans 624 residues: UvrABC system protein C (624 aa).

Residues 25 to 104 (AEPGVYFMRD…IKQHQPHFNV (80 aa)) form the GIY-YIG domain. The UVR domain occupies 214–249 (SELIDTLTPQMEAAAENLNFEQAARIRDQINGLKTL).

Belongs to the UvrC family. Interacts with UvrB in an incision complex.

The protein localises to the cytoplasm. Its function is as follows. The UvrABC repair system catalyzes the recognition and processing of DNA lesions. UvrC both incises the 5' and 3' sides of the lesion. The N-terminal half is responsible for the 3' incision and the C-terminal half is responsible for the 5' incision. In Cyanothece sp. (strain PCC 7425 / ATCC 29141), this protein is UvrABC system protein C.